The primary structure comprises 622 residues: Procollagen galactosyltransferase 1 (622 aa).

The signal sequence occupies residues 1–29; it reads MAAAPRAGRRRGQPLLALLLLLLAPLPPG. Residues asparagine 96, asparagine 184, and asparagine 381 are each glycosylated (N-linked (GlcNAc...) asparagine). Positions 588–606 are enriched in basic and acidic residues; sequence RAKSQKMREQQALSREAKN. The disordered stretch occupies residues 588–622; it reads RAKSQKMREQQALSREAKNSDVLQSPLDSAARDEL. Residues 619-622 carry the Endoplasmic reticulum retention motif motif; that stretch reads RDEL.

It belongs to the glycosyltransferase 25 family. N-glycosylated. Ubiquitous with higher levels in placenta, heart, lung and spleen.

It is found in the endoplasmic reticulum lumen. It catalyses the reaction (5R)-5-hydroxy-L-lysyl-[collagen] + UDP-alpha-D-galactose = (5R)-5-O-(beta-D-galactosyl)-5-hydroxy-L-lysyl-[collagen] + UDP + H(+). Functionally, beta-galactosyltransferase that transfers beta-galactose to hydroxylysine residues of type I collagen. By acting on collagen glycosylation, facilitates the formation of collagen triple helix. Also involved in the biosynthesis of collagen type IV. The chain is Procollagen galactosyltransferase 1 (COLGALT1) from Homo sapiens (Human).